Consider the following 449-residue polypeptide: MLSVAILAAGKGTRMESSLPKVLHKISGKSLLQRVIDSCAELKPDKIFVITGHKSKEVQKSIPKDKKIHVVVQEPQSGTGHAIQVLCSEVKKHEGKLLVLNGDVPLIRPTTLKRLLYLHDSKNADVSLITTKKTNPHGYGRVFLNGDFIERIVEEKDCNELERENPLINAGVYCFNWGNLSEIINTLQSNNNQKEIYLTDTISLLKNSLSLEVEDNGELQGINNRIHLSECEECIQNSIKEKHMLNGVTFINKASCSISEEAEIGKDVIIEANTHIRGNTKINSHCIIGPNTFIENSNVGLQCEISNSTVYDSQVMDHIKIGPYSHIRPNSKISSYSKIGNFVEIKNSQLEEETKVNHLSYIGDSIIGRSTNIGAGTITANFDGQKKYQTKIGKNSSIGANTVFVAPINLGESVTTGAGSVITKDSKDNSLAISRTKQVNIENWKKKKS.

Residues Met-1 to Arg-225 form a pyrophosphorylase region. UDP-N-acetyl-alpha-D-glucosamine-binding positions include Leu-7 to Gly-10, Lys-21, Gln-73, and Gly-78 to Thr-79. Asp-103 contributes to the Mg(2+) binding site. UDP-N-acetyl-alpha-D-glucosamine contacts are provided by Gly-140, Glu-154, Asn-169, and Asn-223. Mg(2+) is bound at residue Asn-223. Residues Ile-226 to Asn-246 form a linker region. An N-acetyltransferase region spans residues Gly-247–Ser-449. UDP-N-acetyl-alpha-D-glucosamine-binding residues include Arg-328 and Lys-346. Residue His-358 is the Proton acceptor of the active site. UDP-N-acetyl-alpha-D-glucosamine-binding residues include Tyr-361 and Asn-372. Acetyl-CoA contacts are provided by Ala-375, Ala-418, and Arg-435.

This sequence in the N-terminal section; belongs to the N-acetylglucosamine-1-phosphate uridyltransferase family. It in the C-terminal section; belongs to the transferase hexapeptide repeat family. In terms of assembly, homotrimer. Requires Mg(2+) as cofactor.

Its subcellular location is the cytoplasm. The enzyme catalyses alpha-D-glucosamine 1-phosphate + acetyl-CoA = N-acetyl-alpha-D-glucosamine 1-phosphate + CoA + H(+). The catalysed reaction is N-acetyl-alpha-D-glucosamine 1-phosphate + UTP + H(+) = UDP-N-acetyl-alpha-D-glucosamine + diphosphate. The protein operates within nucleotide-sugar biosynthesis; UDP-N-acetyl-alpha-D-glucosamine biosynthesis; N-acetyl-alpha-D-glucosamine 1-phosphate from alpha-D-glucosamine 6-phosphate (route II): step 2/2. Its pathway is nucleotide-sugar biosynthesis; UDP-N-acetyl-alpha-D-glucosamine biosynthesis; UDP-N-acetyl-alpha-D-glucosamine from N-acetyl-alpha-D-glucosamine 1-phosphate: step 1/1. It functions in the pathway bacterial outer membrane biogenesis; LPS lipid A biosynthesis. Functionally, catalyzes the last two sequential reactions in the de novo biosynthetic pathway for UDP-N-acetylglucosamine (UDP-GlcNAc). The C-terminal domain catalyzes the transfer of acetyl group from acetyl coenzyme A to glucosamine-1-phosphate (GlcN-1-P) to produce N-acetylglucosamine-1-phosphate (GlcNAc-1-P), which is converted into UDP-GlcNAc by the transfer of uridine 5-monophosphate (from uridine 5-triphosphate), a reaction catalyzed by the N-terminal domain. This Prochlorococcus marinus (strain AS9601) protein is Bifunctional protein GlmU.